We begin with the raw amino-acid sequence, 451 residues long: FAD-dependent monooxygenase adrH (451 aa).

Residues E39, G53, and R112 each contribute to the FAD site. Residue Y196 is part of the active site. The FAD site is built by D288 and A301. An N-linked (GlcNAc...) asparagine glycan is attached at N385. Residues 426–446 traverse the membrane as a helical segment; sequence TLLWVSSLALFLFFPWLGSYL.

The protein belongs to the paxM FAD-dependent monooxygenase family. Requires FAD as cofactor.

It is found in the membrane. Its pathway is secondary metabolite biosynthesis; terpenoid biosynthesis. FAD-dependent monooxygenase; part of the gene cluster that mediates the biosynthesis of andrastins, meroterpenoid compounds that exhibit inhibitory activity against ras farnesyltransferase, suggesting that they could be promising leads for antitumor agents. The first step of the pathway is the synthesis of 3,5-dimethylorsellinic acid (DMOA) by the polyketide synthase adrD via condensation of one acetyl-CoA starter unit with 3 malonyl-CoA units and 2 methylations. DMAO is then converted to farnesyl-DMAO by the prenyltransferase adrG. The methyltransferase adrK catalyzes the methylation of the carboxyl group of farnesyl-DMAO to farnesyl-DMAO methyl ester which is further converted to epoxyfarnesyl-DMAO methyl ester by the FAD-dependent monooxygenase adrH. The terpene cyclase adrI then catalyzes the carbon skeletal rearrangement to generate the andrastin E, the first compound in the pathway having the andrastin scaffold, with the tetracyclic ring system. The post-cyclization tailoring enzymes adrF, adrE, adrJ, and adrA, are involved in the conversion of andrastin E into andrastin A. The short chain dehydrogenase adrF is responsible for the oxidation of the C-3 a hydroxyl group of andrastin E to yield the corresponding ketone, andrastin D. The ketoreductase adrE stereoselectively reduces the carbonyl moiety to reverse the stereochemistry of the C-3 position to yield andrastin F. The acetyltransferase adrJ is the acetyltransferase that attaches the acetyl group to the C-3 hydroxyl group of andrastin F to yield andrastin C. Finally, the cytochrome P450 monooxygenase adrA catalyzes two sequential oxidation reactions of the C-23 methyl group, to generate the corresponding alcohol andrastin B, and aldehyde andrastin A. This chain is FAD-dependent monooxygenase adrH, found in Penicillium rubens (strain ATCC 28089 / DSM 1075 / NRRL 1951 / Wisconsin 54-1255) (Penicillium chrysogenum).